The following is a 312-amino-acid chain: Small ribosomal subunit protein RACK1 (312 aa).

WD repeat units lie at residues 9–42 (GHRGWVTSLACPQQAGSYIKVVSTSRDGTAISWK), 63–93 (GHTGFVSCVSLAHATDYALTASWDRSIRMWD), 105–135 (KHTKDVLAVAFSPDDRLIVSAGRDNVIRVWN), 148–180 (GHEDWVSSICFSPSLEHPIVVSGSWDNTIKVWN), 192–222 (GHSNYVSTVTVSPDGSLCASGGKDGAALLWD), 233–262 (NVESPINQIAFSPNRFWMCVATERSLSVYD), and 279–307 (PSECISIAWSADGNTLYSGHKDNLIRVWS).

This sequence belongs to the WD repeat G protein beta family. Ribosomal protein RACK1 subfamily.

This chain is Small ribosomal subunit protein RACK1, found in Leishmania chagasi.